The sequence spans 426 residues: 3-phosphoshikimate 1-carboxyvinyltransferase (426 aa).

3-phosphoshikimate-binding residues include lysine 22, serine 23, and arginine 27. Phosphoenolpyruvate is bound at residue lysine 22. 2 residues coordinate phosphoenolpyruvate: glycine 96 and arginine 124. 7 residues coordinate 3-phosphoshikimate: serine 170, serine 171, glutamine 172, serine 198, aspartate 314, asparagine 337, and lysine 341. Glutamine 172 contacts phosphoenolpyruvate. The active-site Proton acceptor is aspartate 314. Residues arginine 345, arginine 387, and lysine 412 each contribute to the phosphoenolpyruvate site.

Belongs to the EPSP synthase family. Monomer.

It localises to the cytoplasm. The catalysed reaction is 3-phosphoshikimate + phosphoenolpyruvate = 5-O-(1-carboxyvinyl)-3-phosphoshikimate + phosphate. It functions in the pathway metabolic intermediate biosynthesis; chorismate biosynthesis; chorismate from D-erythrose 4-phosphate and phosphoenolpyruvate: step 6/7. Catalyzes the transfer of the enolpyruvyl moiety of phosphoenolpyruvate (PEP) to the 5-hydroxyl of shikimate-3-phosphate (S3P) to produce enolpyruvyl shikimate-3-phosphate and inorganic phosphate. This chain is 3-phosphoshikimate 1-carboxyvinyltransferase, found in Shewanella baltica (strain OS195).